The primary structure comprises 269 residues: uncharacterized protein (269 aa).

Positions 52–262 (KNVYEQLVAT…RKILVESINK (211 aa)) form a coiled coil.

This is an uncharacterized protein from Caenorhabditis elegans.